Here is a 903-residue protein sequence, read N- to C-terminus: Zinc finger CCCH domain-containing protein 27 (903 aa).

The disordered stretch occupies residues 1–144 (MIKESSSPAL…GRNGAPWAQH (144 aa)). The segment covering 11-24 (DADKIEVPSPKDEN) has biased composition (basic and acidic residues). Over residues 33-46 (TDNEDFEISDDDDD) the composition is skewed to acidic residues. Over residues 86-96 (SHGEAQKDFFP) the composition is skewed to basic and acidic residues. Residues 225 to 253 (GMPRQRCRDFEERGFCLRGDMCPMEHGLN) form a C3H1-type zinc finger. The segment at 390-456 (ASKKLGHGKT…GRQSNRASHK (67 aa)) is disordered. Residues 397-410 (GKTANATSTSATGN) show a composition bias toward low complexity. Residues 432–441 (KDSNGQSNSR) show a composition bias toward polar residues. The 73-residue stretch at 459–531 (RTLYVNGIPL…RFIKLWWANR (73 aa)) folds into the RRM domain. Disordered stretches follow at residues 545-609 (KSSH…DTKR), 642-720 (KQKG…QTSP), and 826-903 (TNHS…DVSQ). The span at 556-576 (SVPQPSSSNRGKENLQSATPR) shows a compositional bias: polar residues. A compositionally biased stretch (low complexity) spans 577 to 587 (ASSGSSAEASG). A coiled-coil region spans residues 608 to 649 (KRQESLELLEELRKKQEILAQKRDEFRRQLEKLAKQKGLANS). The span at 693–708 (SGELASSSHKSSATSA) shows a compositional bias: low complexity. Over residues 826–886 (TNHSRFQKTS…SMPTATSAKT (61 aa)) the composition is skewed to polar residues.

The protein is Zinc finger CCCH domain-containing protein 27 of Oryza sativa subsp. japonica (Rice).